Reading from the N-terminus, the 108-residue chain is MPLTPPPDYTKPFIAVVVGGTLAAFVLLLTRNTLPHTGDNLHSLPHGGTYCDGTKRIRYGGPHRSHVPELPAKSWALITVVAILIALHFSCLRTHRVHRCVLCHTTSG.

The Cytoplasmic segment spans residues 1–8 (MPLTPPPD). The chain crosses the membrane as a helical span at residues 9–29 (YTKPFIAVVVGGTLAAFVLLL). Topologically, residues 30–71 (TRNTLPHTGDNLHSLPHGGTYCDGTKRIRYGGPHRSHVPELP) are lumenal. The helical transmembrane segment at 72-92 (AKSWALITVVAILIALHFSCL) threads the bilayer. Residues 93–108 (RTHRVHRCVLCHTTSG) are Cytoplasmic-facing.

Belongs to the Tymovirales TGBp2 protein family.

The protein resides in the host endoplasmic reticulum membrane. Plays a role in viral cell-to-cell propagation, by facilitating genome transport to neighboring plant cells through plasmosdesmata,. The chain is Movement protein TGB2 from Lily virus X.